We begin with the raw amino-acid sequence, 474 residues long: uncharacterized protein (474 aa).

A helical membrane pass occupies residues 374-398; that stretch reads GLICYLALFSISLMIENIIGLTISL.

It localises to the membrane. This is an uncharacterized protein from Borreliella burgdorferi (strain ATCC 35210 / DSM 4680 / CIP 102532 / B31) (Borrelia burgdorferi).